The primary structure comprises 80 residues: RNA-binding protein Hfq (80 aa).

Positions 9 to 68 constitute a Sm domain; it reads EPFLNALRKERIPVSIYLVNGIKLQGQIDSFDQFVVLLKNTVSQMVYKHAISTIVPSRPV.

This sequence belongs to the Hfq family. In terms of assembly, homohexamer.

Its function is as follows. RNA chaperone that binds small regulatory RNA (sRNAs) and mRNAs to facilitate mRNA translational regulation in response to envelope stress, environmental stress and changes in metabolite concentrations. Also binds with high specificity to tRNAs. This is RNA-binding protein Hfq from Thioalkalivibrio sulfidiphilus (strain HL-EbGR7).